Here is a 180-residue protein sequence, read N- to C-terminus: Large ribosomal subunit protein uL6 (180 aa).

The protein belongs to the universal ribosomal protein uL6 family. As to quaternary structure, part of the 50S ribosomal subunit.

This protein binds to the 23S rRNA, and is important in its secondary structure. It is located near the subunit interface in the base of the L7/L12 stalk, and near the tRNA binding site of the peptidyltransferase center. The sequence is that of Large ribosomal subunit protein uL6 from Mesoplasma florum (strain ATCC 33453 / NBRC 100688 / NCTC 11704 / L1) (Acholeplasma florum).